A 498-amino-acid chain; its full sequence is ATP synthase subunit beta, chloroplastic (498 aa).

An ATP-binding site is contributed by 172–179; the sequence is GGAGVGKT.

Belongs to the ATPase alpha/beta chains family. In terms of assembly, F-type ATPases have 2 components, CF(1) - the catalytic core - and CF(0) - the membrane proton channel. CF(1) has five subunits: alpha(3), beta(3), gamma(1), delta(1), epsilon(1). CF(0) has four main subunits: a(1), b(1), b'(1) and c(9-12).

It localises to the plastid. It is found in the chloroplast thylakoid membrane. The enzyme catalyses ATP + H2O + 4 H(+)(in) = ADP + phosphate + 5 H(+)(out). In terms of biological role, produces ATP from ADP in the presence of a proton gradient across the membrane. The catalytic sites are hosted primarily by the beta subunits. The protein is ATP synthase subunit beta, chloroplastic of Nicotiana tomentosiformis (Tobacco).